Reading from the N-terminus, the 254-residue chain is Ribonuclease PH (254 aa).

Residues R90 and 128–130 (GTR) each bind phosphate.

This sequence belongs to the RNase PH family. As to quaternary structure, homohexameric ring arranged as a trimer of dimers.

The enzyme catalyses tRNA(n+1) + phosphate = tRNA(n) + a ribonucleoside 5'-diphosphate. Phosphorolytic 3'-5' exoribonuclease that plays an important role in tRNA 3'-end maturation. Removes nucleotide residues following the 3'-CCA terminus of tRNAs; can also add nucleotides to the ends of RNA molecules by using nucleoside diphosphates as substrates, but this may not be physiologically important. Probably plays a role in initiation of 16S rRNA degradation (leading to ribosome degradation) during starvation. In Corynebacterium kroppenstedtii (strain DSM 44385 / JCM 11950 / CIP 105744 / CCUG 35717), this protein is Ribonuclease PH.